Here is an 85-residue protein sequence, read N- to C-terminus: Transcriptional repressor protein KorC (85 aa).

Positions 28–47 form a DNA-binding region, H-T-H motif; it reads EVLRLAGLTGGKAAKVLGLG.

Functionally, acts with KorA as corepressor in the control of the kilC and kilE operons. The protein is Transcriptional repressor protein KorC (korC) of Escherichia coli.